A 401-amino-acid polypeptide reads, in one-letter code: Phosphoglycerate kinase (401 aa).

Residues 26–28, R41, 64–67, R125, and R158 each bind substrate; these read DFN and HLGK. Residues K209, G300, E331, and 357 to 360 each bind ATP; that span reads GGDS.

It belongs to the phosphoglycerate kinase family. Monomer.

It is found in the cytoplasm. The enzyme catalyses (2R)-3-phosphoglycerate + ATP = (2R)-3-phospho-glyceroyl phosphate + ADP. The protein operates within carbohydrate degradation; glycolysis; pyruvate from D-glyceraldehyde 3-phosphate: step 2/5. The polypeptide is Phosphoglycerate kinase (Clostridium tetani (strain Massachusetts / E88)).